Consider the following 518-residue polypeptide: Membrane-bound lytic murein transglycosylase F (518 aa).

The first 21 residues, 1–21 (MKKLKINYLFIGILALLLAVA), serve as a signal peptide directing secretion. Positions 22–269 (LWPSIPWFGK…RIEEKYLGHG (248 aa)) are non-LT domain. The tract at residues 270–518 (DDFDYVDTRT…SRKGSEEKQN (249 aa)) is LT domain. Residue Glu314 is part of the active site.

This sequence in the N-terminal section; belongs to the bacterial solute-binding protein 3 family. The protein in the C-terminal section; belongs to the transglycosylase Slt family.

It localises to the cell outer membrane. It carries out the reaction Exolytic cleavage of the (1-&gt;4)-beta-glycosidic linkage between N-acetylmuramic acid (MurNAc) and N-acetylglucosamine (GlcNAc) residues in peptidoglycan, from either the reducing or the non-reducing ends of the peptidoglycan chains, with concomitant formation of a 1,6-anhydrobond in the MurNAc residue.. Functionally, murein-degrading enzyme that degrades murein glycan strands and insoluble, high-molecular weight murein sacculi, with the concomitant formation of a 1,6-anhydromuramoyl product. Lytic transglycosylases (LTs) play an integral role in the metabolism of the peptidoglycan (PG) sacculus. Their lytic action creates space within the PG sacculus to allow for its expansion as well as for the insertion of various structures such as secretion systems and flagella. The sequence is that of Membrane-bound lytic murein transglycosylase F from Shigella sonnei (strain Ss046).